The following is a 298-amino-acid chain: Protoheme IX farnesyltransferase (298 aa).

8 helical membrane-spanning segments follow: residues 26 to 46 (IVIL…GGPP), 48 to 68 (LGLT…ANAI), 110 to 130 (FLVL…GLLF), 147 to 167 (IVIG…AVTG), 174 to 194 (VIMF…LALF), 220 to 240 (ILLY…TGTV), 243 to 263 (LYLW…VGLL), and 276 to 296 (TYGW…LDVT).

It belongs to the UbiA prenyltransferase family. Protoheme IX farnesyltransferase subfamily. In terms of assembly, interacts with CtaA.

The protein localises to the cell membrane. It catalyses the reaction heme b + (2E,6E)-farnesyl diphosphate + H2O = Fe(II)-heme o + diphosphate. It functions in the pathway porphyrin-containing compound metabolism; heme O biosynthesis; heme O from protoheme: step 1/1. Functionally, converts heme B (protoheme IX) to heme O by substitution of the vinyl group on carbon 2 of heme B porphyrin ring with a hydroxyethyl farnesyl side group. The polypeptide is Protoheme IX farnesyltransferase (Symbiobacterium thermophilum (strain DSM 24528 / JCM 14929 / IAM 14863 / T)).